The following is a 500-amino-acid chain: L-arabinose isomerase (500 aa).

Mn(2+)-binding residues include E306, E333, H350, and H450.

It belongs to the arabinose isomerase family. As to quaternary structure, homohexamer. Mn(2+) is required as a cofactor.

It catalyses the reaction beta-L-arabinopyranose = L-ribulose. It functions in the pathway carbohydrate degradation; L-arabinose degradation via L-ribulose; D-xylulose 5-phosphate from L-arabinose (bacterial route): step 1/3. In terms of biological role, catalyzes the conversion of L-arabinose to L-ribulose. This chain is L-arabinose isomerase, found in Salmonella choleraesuis (strain SC-B67).